We begin with the raw amino-acid sequence, 634 residues long: Chaperone protein HtpG (634 aa).

Residues 1 to 342 form an a; substrate-binding region; sequence MSVETQKETL…SNDLSLNVSR (342 aa). A b region spans residues 343 to 559; sequence EILQKDPVID…EQDLGLQMRQ (217 aa). The segment at 560 to 634 is c; sequence ILEASGQKVP…LNKLLVELSA (75 aa).

It belongs to the heat shock protein 90 family. Homodimer.

It is found in the cytoplasm. Functionally, molecular chaperone. Has ATPase activity. In Pseudomonas paraeruginosa (strain DSM 24068 / PA7) (Pseudomonas aeruginosa (strain PA7)), this protein is Chaperone protein HtpG.